A 199-amino-acid chain; its full sequence is Small ribosomal subunit protein uS7 (199 aa).

It belongs to the universal ribosomal protein uS7 family. In terms of assembly, part of the 30S ribosomal subunit.

Its function is as follows. One of the primary rRNA binding proteins, it binds directly to 16S rRNA where it nucleates assembly of the head domain of the 30S subunit. Is located at the subunit interface close to the decoding center. The sequence is that of Small ribosomal subunit protein uS7 from Cenarchaeum symbiosum (strain A).